The sequence spans 591 residues: Paxillin (591 aa).

An N-acetylmethionine modification is found at M1. At D2 the chain carries N-acetylserine. The LD motif 1 motif lies at 3-15 (DLDALLADLESTT). A disordered region spans residues 17–138 (HISKRPVFLS…PSPTVMSTSL (122 aa)). Y31 is subject to Phosphotyrosine; by PTK6. The segment covering 45-54 (VPPPVPPPPS) has biased composition (pro residues). Over residues 69 to 106 (WQPSSSRFIHQQPQSSSPVYGSSAKTSSVSNPQDSVGS) the composition is skewed to polar residues. A phosphoserine mark is found at S83 and S85. Position 88 is a phosphotyrosine (Y88). S106 carries the phosphoserine modification. At Y118 the chain carries Phosphotyrosine; by PTK6. S119, S126, and S130 each carry phosphoserine. Residues 121 to 137 (PNKQKSAEPSPTVMSTS) show a composition bias toward polar residues. The residue at position 132 (T132) is a Phosphothreonine. A phosphoserine mark is found at S137, S140, and S143. The short motif at 144–156 (ELDRLLLELNAVQ) is the LD motif 2 element. The tract at residues 159–260 (PPGFPADEAN…TQQQTRISAS (102 aa)) is disordered. At Y181 the chain carries Phosphotyrosine. The short motif at 216 to 228 (SVESLLDELESSV) is the LD motif 3 element. S230 is subject to Phosphoserine. The segment covering 236-260 (TVNQGEMSSPQRVTSTQQQTRISAS) has biased composition (polar residues). The residue at position 244 (S244) is a Phosphoserine; by CDK5. A Phosphoserine; by SLK modification is found at S250. S258, S261, S272, S303, S322, S332, and S340 each carry phosphoserine. The segment at 262–315 (ATRELDELMASLSDFKIQGLEQRADGERCWAAGWPRDGGRSSPGGQDEGGFMAQ) is required for binding to PARVA and ILK. The LD motif 4 signature appears at 265 to 276 (ELDELMASLSDF). A disordered region spans residues 291 to 335 (WAAGWPRDGGRSSPGGQDEGGFMAQGKTGSSSPPGGPPKPGSQLD). Residues 333–345 (QLDSMLGSLQSDL) carry the LD motif 5 motif. LIM zinc-binding domains are found at residues 356-415 (GVCG…LFSP), 416-473 (RCYY…DMFA), 474-533 (PKCG…RRGS), and 534-591 (LCSG…KLFC). Phosphoserine is present on S533.

Belongs to the paxillin family. In terms of assembly, interacts in vitro with VCL/vinculin as well as to the SH3 domain of SRC and, when tyrosine phosphorylated, to the SH2 domain of CRK. Interacts with GIT1. Interacts with NUDT16L1/SDOS. Interacts with PTK2/FAK1. Interacts with PTK2B/PYK2. Interacts with ASAP2. Interacts with unphosphorylated ITGA4. Interacts with RNF5. Interacts with PDCD10. Interacts with NEK3, the interaction is prolactin-dependent. Interacts with PTK6. Interacts with TGFB1I1. Interacts with SORBS1. Interacts with PARVB. Interacts (via LD motif 4) with PARVA/PARVIN. Interacts (via LD motif 4) with ILK. Interacts (via cytoplasmic domain) with CEACAM1; the interaction is phosphotyrosyl-dependent. Interacts with LIMA1; this complex stabilizes actin dynamics. Interacts with CD36 (via C-terminus). Interacts with TRIM15. Interacts with PAK4; PAK4 acts as a scaffold to suppport PAXI phosphorylation at Ser-272. Interacts strongly with PTK2/FAK1 and weakly with VCL/vinculin. As to quaternary structure, interacts strongly with VCL/vinculin but only weakly with PTK2/FAK1. Post-translationally, phosphorylated by MAPK1/ERK2. Phosphorylated on tyrosine residues during integrin-mediated cell adhesion, embryonic development, fibroblast transformation and following stimulation of cells by mitogens. Phosphorylation at Ser-244 by CDK5 reduces its interaction with PTK2/FAK1 in matrix-cell focal adhesions (MCFA) during oligodendrocytes (OLs) differentiation. Phosphorylation at Tyr-31 and Tyr-118 by PTK6 promote the activation of RAC1 via CRK/CrKII, thereby promoting migration and invasion. Phosphorylation at Ser-250 by SLK is required for PXN redistribution and cell motility. Phosphorylation at Ser-272 promotes focal adhesion disassembly during cell migration.

Its subcellular location is the cytoplasm. It is found in the cytoskeleton. It localises to the cell junction. The protein resides in the focal adhesion. The protein localises to the cell cortex. Its function is as follows. Cytoskeletal protein involved in actin-membrane attachment at sites of cell adhesion to the extracellular matrix (focal adhesion). Recruits other proteins such as TRIM15 to focal adhesion. This is Paxillin from Homo sapiens (Human).